Reading from the N-terminus, the 225-residue chain is Sodium-dependent neutral amino acid transporter SLC6A17 (225 aa).

The next 3 membrane-spanning stretches (helical) occupy residues 1–8 (NVWRFPYL), 16–35 (AYLV…LFFL), and 60–80 (GIGF…NVII). The Extracellular portion of the chain corresponds to 81–143 (GWSIFYFFKS…NSISESGGLN (63 aa)). Asparagine 105 is a glycosylation site (N-linked (GlcNAc...) asparagine). 3 helical membrane-spanning segments follow: residues 144-162 (WKMT…MAVV), 171-188 (VMYF…CFLV), and 224-225 (IF).

The protein belongs to the sodium:neurotransmitter symporter (SNF) (TC 2.A.22) family.

The protein localises to the cytoplasmic vesicle. It is found in the secretory vesicle. Its subcellular location is the synaptic vesicle membrane. The protein resides in the postsynapse. It localises to the presynapse. It catalyses the reaction L-proline(in) + Na(+)(in) = L-proline(out) + Na(+)(out). The enzyme catalyses L-leucine(in) + Na(+)(in) = L-leucine(out) + Na(+)(out). The catalysed reaction is glycine(in) + Na(+)(in) = glycine(out) + Na(+)(out). It carries out the reaction L-alanine(in) + Na(+)(in) = L-alanine(out) + Na(+)(out). It catalyses the reaction L-glutamine(in) + Na(+)(in) = L-glutamine(out) + Na(+)(out). In terms of biological role, synaptic vesicle transporter with apparent selectivity for neutral amino acids. The transport is sodium-coupled but chloride-independent, likely driven by the proton electrochemical gradient generated by vacuolar H(+)-ATPase in an overall electrogenic mechanism. May contribute to the synaptic uptake of neurotransmitter precursors in a process coupled in part to vesicle exocytosis. This chain is Sodium-dependent neutral amino acid transporter SLC6A17, found in Bos taurus (Bovine).